The following is a 122-amino-acid chain: Large ribosomal subunit protein uL14 (122 aa).

This sequence belongs to the universal ribosomal protein uL14 family. In terms of assembly, part of the 50S ribosomal subunit. Forms a cluster with proteins L3 and L19. In the 70S ribosome, L14 and L19 interact and together make contacts with the 16S rRNA in bridges B5 and B8.

Its function is as follows. Binds to 23S rRNA. Forms part of two intersubunit bridges in the 70S ribosome. This is Large ribosomal subunit protein uL14 from Beijerinckia indica subsp. indica (strain ATCC 9039 / DSM 1715 / NCIMB 8712).